Here is a 3718-residue protein sequence, read N- to C-terminus: Laminin subunit alpha-5 (3718 aa).

A signal peptide spans 1-40 (MAKRGGQLCAGSAPGALGPRSPAPRPLLLLLAGLALVGEA). Residues 46–304 (DGFSLHPPYF…SIKDISIGGR (259 aa)) form the Laminin N-terminal domain. N-linked (GlcNAc...) asparagine glycans are attached at residues Asn100, Asn148, and Asn248. Intrachain disulfides connect Cys305–Cys314, Cys307–Cys327, Cys329–Cys338, Cys341–Cys361, Cys364–Cys373, Cys366–Cys398, Cys401–Cys410, Cys413–Cys431, Cys434–Cys445, Cys436–Cys452, Cys454–Cys463, and Cys466–Cys476. Laminin EGF-like domains follow at residues 305-363 (CVCH…ECQS), 364-433 (CNCH…VCRP), and 434-479 (CDCE…CYPL). The N-linked (GlcNAc...) asparagine glycan is linked to Asn383. Asn457 carries N-linked (GlcNAc...) asparagine glycosylation. The N-linked (GlcNAc...) asparagine glycan is linked to Asn485. 29 disulfides stabilise this stretch: Cys500-Cys512, Cys502-Cys521, Cys523-Cys532, Cys535-Cys544, Cys547-Cys559, Cys549-Cys566, Cys568-Cys577, Cys580-Cys590, Cys593-Cys605, Cys595-Cys611, Cys613-Cys622, Cys625-Cys635, Cys638-Cys650, Cys640-Cys656, Cys658-Cys667, Cys670-Cys680, Cys683-Cys695, Cys685-Cys702, Cys704-Cys713, Cys716-Cys731, Cys752-Cys761, Cys764-Cys779, Cys782-Cys796, Cys784-Cys802, Cys804-Cys813, Cys816-Cys831, Cys834-Cys846, Cys836-Cys853, and Cys855-Cys864. Laminin EGF-like domains are found at residues 500 to 546 (CDCN…SCHP), 547 to 592 (CQCS…LCQL), 593 to 637 (CGCS…DCHA), 638 to 682 (CACD…SCIP), 683 to 728 (CHCS…YCEA), 729 to 781 (GSCH…GCTR), and 782 to 833 (CSCD…GCRS). A Laminin EGF-like 11; truncated domain is found at 834–855 (CRCDVGGALGQGCEPKTGACRC). The tract at residues 856 to 1442 (RPNTQGPTCS…SLFYNNGALP (587 aa)) is domain IV 1 (domain IV B). 3 N-linked (GlcNAc...) asparagine glycosylation sites follow: Asn905, Asn926, and Asn964. Residues 1253-1284 (LTQSQELSPGAPPEGPQPRPPTAVDPNAEPTL) are disordered. Pro residues predominate over residues 1262–1275 (GAPPEGPQPRPPTA). N-linked (GlcNAc...) asparagine glycosylation occurs at Asn1335. 16 disulfide bridges follow: Cys1443/Cys1455, Cys1445/Cys1462, Cys1464/Cys1473, Cys1476/Cys1486, Cys1489/Cys1496, Cys1491/Cys1503, Cys1505/Cys1514, Cys1517/Cys1530, Cys1533/Cys1548, Cys1535/Cys1555, Cys1557/Cys1566, Cys1569/Cys1579, Cys1582/Cys1594, Cys1584/Cys1601, Cys1603/Cys1612, and Cys1615/Cys1630. 4 Laminin EGF-like domains span residues 1443–1488 (CGCH…NCRP), 1489–1532 (CDCG…GCEE), 1533–1581 (CNCS…SCRP), and 1582–1632 (CDCH…GCTR). Residue Asn1534 is glycosylated (N-linked (GlcNAc...) asparagine). One can recognise a Laminin EGF-like 16; first part domain in the interval 1633-1642 (CFCFGATERC). The Laminin IV type A domain occupies 1646–1831 (NLARHEFVDM…RGPPASNVEL (186 aa)). 2 short sequence motifs (cell attachment site) span residues 1723–1725 (RGD) and 1839–1841 (RGD). The region spanning 1832 to 1864 (CMCPANYRGDSCQECAPGYYRDTKGLFLGRCVP) is the Laminin EGF-like 16; second part domain. Cystine bridges form between Cys1865–Cys1874, Cys1867–Cys1881, Cys1884–Cys1893, Cys1896–Cys1912, Cys1915–Cys1930, Cys1917–Cys1939, Cys1941–Cys1950, Cys1953–Cys1968, Cys1971–Cys1986, Cys1973–Cys1993, Cys1996–Cys2005, Cys2008–Cys2022, Cys2025–Cys2035, Cys2027–Cys2042, Cys2044–Cys2053, Cys2056–Cys2069, Cys2072–Cys2083, Cys2074–Cys2090, Cys2092–Cys2101, Cys2104–Cys2116, Cys2119–Cys2126, Cys2121–Cys2133, Cys2135–Cys2144, and Cys2147–Cys2166. Laminin EGF-like domains are found at residues 1865 to 1914 (CQCH…PCVS), 1915 to 1970 (CPCP…SCQP), 1971 to 2024 (CDCS…NCTR), 2025 to 2071 (CDCS…GCRP), 2072 to 2118 (CACG…GCRR), and 2119 to 2168 (CQCP…HCEV). An N-linked (GlcNAc...) asparagine glycan is attached at Asn2021. The domain II and I stretch occupies residues 2169–2735 (CDHCVVLLLD…AQARSAASKV (567 aa)). N-linked (GlcNAc...) asparagine glycosylation is found at Asn2198, Asn2211, Asn2365, Asn2395, Asn2425, Asn2503, and Asn2570. 2 coiled-coil regions span residues 2205–2257 (ARLH…SQAT) and 2330–2464 (TRDL…ASLD). Coiled coils occupy residues 2604 to 2621 (ARKNQLAAQIQEAQAMLA) and 2639 to 2705 (AEAL…LENR). A glycan (N-linked (GlcNAc...) asparagine) is linked at Asn2709. 5 Laminin G-like domains span residues 2736–2933 (KVSM…DKPC), 2947–3119 (GSYL…SFGC), 3128–3296 (TMTF…SVGC), 3337–3511 (AYQF…VTPC), and 3518–3689 (DGLF…MRGC). 2 disulfides stabilise this stretch: Cys2903-Cys2933 and Cys3094-Cys3119. N-linked (GlcNAc...) asparagine glycans are attached at residues Asn3111, Asn3213, Asn3261, and Asn3291. 2 disulfide bridges follow: Cys3265–Cys3296 and Cys3488–Cys3511. 2 N-linked (GlcNAc...) asparagine glycosylation sites follow: Asn3623 and Asn3673. A disulfide bridge links Cys3661 with Cys3689.

Laminin is a complex glycoprotein, consisting of three different polypeptide chains (alpha, beta, gamma), which are bound to each other by disulfide bonds into a cross-shaped molecule comprising one long and three short arms with globules at each end. Alpha-5 is a subunit of laminin-10 (laminin-511), laminin-11 (laminin-521) and laminin-15 (laminin-523). As to expression, in adult, high levels in heart, lung, and kidney; lower in brain, muscle and testis; very low in liver, gut and skin.

The protein resides in the secreted. It is found in the extracellular space. It localises to the extracellular matrix. The protein localises to the basement membrane. Binding to cells via a high affinity receptor, laminin is thought to mediate the attachment, migration and organization of cells into tissues during embryonic development by interacting with other extracellular matrix components. Alpha-5 may be the major laminin alpha chain of adult epithelial and/or endothelial basal laminae. Plays a role in the regulation of skeletogenesis, through a mechanism that involves integrin-mediated signaling and PTK2B/PYK2. The sequence is that of Laminin subunit alpha-5 (Lama5) from Mus musculus (Mouse).